The following is a 608-amino-acid chain: Centromere DNA-binding protein complex CBF3 subunit B (608 aa).

Positions 14-42 form a DNA-binding region, zn(2)-C6 fungal-type; it reads CSVCTRRKVKCDRMIPCGNCRKRGQDSEC. Ser575 is modified (phosphoserine).

As to quaternary structure, component of the CBF3 copmplex, which is formed of CBF3A/CBF2, CBF3B/CEP3, CBF3C/CTF13 and CBF3D.

The protein resides in the nucleus. Its subcellular location is the chromosome. The protein localises to the centromere. Its function is as follows. Acts as a component of the centromere DNA-binding protein complex CBF3, which is essential for chromosome segregation and movement of centromeres along microtubules. CBF3 is required for the recruitment of other kinetochore complexes to CEN DNA. It plays a role in the attachment of chromosomes to the spindle and binds selectively to a highly conserved DNA sequence called CDEIII, found in centromers and in several promoters. This is Centromere DNA-binding protein complex CBF3 subunit B (CEP3) from Saccharomyces cerevisiae (strain ATCC 204508 / S288c) (Baker's yeast).